We begin with the raw amino-acid sequence, 366 residues long: 15-cis-zeta-carotene isomerase, chloroplastic (366 aa).

The transit peptide at 1–45 (MASQLRLHLAATPPLLPHRRPHLARPLCPTLNPIRAPLPPLSRVL) directs the protein to the chloroplast. 6 helical membrane passes run 94-114 (SWAY…VLWI), 136-156 (EVVM…MASL), 171-191 (VLFA…FINH), 203-223 (GITG…FFLY), 260-280 (VIWC…AASV), and 338-358 (LPYV…PLMQ).

In terms of tissue distribution, expressed in leaves and roots, and at lower levels in embryos and endosperm.

It is found in the plastid. The protein resides in the chloroplast membrane. The catalysed reaction is 9,9',15-tri-cis-zeta-carotene = 9,9'-di-cis-zeta-carotene. Its function is as follows. Isomerase involved in the biosynthesis of carotenoids. Catalyzes the cis- to trans-conversion of the 15-cis-bond in 9,15,9'-tri-cis-zeta-carotene. This Zea mays (Maize) protein is 15-cis-zeta-carotene isomerase, chloroplastic.